Reading from the N-terminus, the 150-residue chain is Phosphoribosyl-AMP cyclohydrolase (150 aa).

Asp93 is a Mg(2+) binding site. Cys94 lines the Zn(2+) pocket. Positions 95 and 97 each coordinate Mg(2+). 2 residues coordinate Zn(2+): Cys112 and Cys119.

This sequence belongs to the PRA-CH family. As to quaternary structure, homodimer. Mg(2+) serves as cofactor. Requires Zn(2+) as cofactor.

Its subcellular location is the cytoplasm. It carries out the reaction 1-(5-phospho-beta-D-ribosyl)-5'-AMP + H2O = 1-(5-phospho-beta-D-ribosyl)-5-[(5-phospho-beta-D-ribosylamino)methylideneamino]imidazole-4-carboxamide. It functions in the pathway amino-acid biosynthesis; L-histidine biosynthesis; L-histidine from 5-phospho-alpha-D-ribose 1-diphosphate: step 3/9. Functionally, catalyzes the hydrolysis of the adenine ring of phosphoribosyl-AMP. This is Phosphoribosyl-AMP cyclohydrolase from Rhizobium leguminosarum bv. trifolii (strain WSM2304).